The sequence spans 627 residues: Monoterpene synthase like 1, chloroplastic (627 aa).

Residues 1 to 50 (MDLISVLPSTSKSCVCMHKPLSSSTHKLKPFCRTIRILGMPRPRKSVLMA) constitute a chloroplast transit peptide. Residues D378, D382, and D530 each coordinate Mg(2+). A DDXXD motif motif is present at residues 378 to 382 (DDMYD).

Belongs to the terpene synthase family. Tpsd subfamily. Mg(2+) serves as cofactor. Mn(2+) is required as a cofactor.

Its subcellular location is the plastid. It is found in the chloroplast. The protein operates within terpene metabolism; oleoresin biosynthesis. It functions in the pathway secondary metabolite biosynthesis; terpenoid biosynthesis. In terms of biological role, monoterpene synthase (TPS) involved in the biosynthesis of monoterpene natural products included in conifer oleoresin secretions and volatile emissions; these compounds contribute to biotic and abiotic stress defense against herbivores and pathogens. The chain is Monoterpene synthase like 1, chloroplastic from Pinus contorta (Shore pine).